The sequence spans 278 residues: Trehalose/maltose transport system permease protein MalG (278 aa).

6 consecutive transmembrane segments (helical) span residues 12–32 (IIGA…MIVV), 74–94 (IIIA…AAYA), 106–126 (IPIF…GYLF), 141–161 (LYFP…LSYF), 186–206 (IILP…FIAA), and 242–262 (GSVM…ALLF). The ABC transmembrane type-1 domain occupies 70–262 (LKNSIIIASL…IPLVIMALLF (193 aa)).

This sequence belongs to the binding-protein-dependent transport system permease family. The complex is composed of two ATP-binding proteins (MalK), two transmembrane proteins (MalG and MalF) and a solute-binding protein (MalE).

Its subcellular location is the cell membrane. In terms of biological role, part of the ABC transporter complex MalEFGK involved in trehalose/maltose import. Responsible for the translocation of the substrate across the membrane. The chain is Trehalose/maltose transport system permease protein MalG (malG) from Thermococcus litoralis (strain ATCC 51850 / DSM 5473 / JCM 8560 / NS-C).